The following is a 155-amino-acid chain: Probable Brix domain-containing ribosomal biogenesis protein (155 aa).

The Brix domain occupies 1–155 (MLLTTSRKPS…LLIRDFRVGE (155 aa)).

Its function is as follows. Probably involved in the biogenesis of the ribosome. The protein is Probable Brix domain-containing ribosomal biogenesis protein of Methanothermobacter thermautotrophicus (strain ATCC 29096 / DSM 1053 / JCM 10044 / NBRC 100330 / Delta H) (Methanobacterium thermoautotrophicum).